Consider the following 368-residue polypeptide: Phosphoserine aminotransferase (368 aa).

Residue arginine 44 coordinates L-glutamate. Pyridoxal 5'-phosphate contacts are provided by residues 78–79 (AT), tryptophan 104, threonine 157, aspartate 179, and glutamine 202. Lysine 203 is modified (N6-(pyridoxal phosphate)lysine). 244-245 (NT) is a binding site for pyridoxal 5'-phosphate.

It belongs to the class-V pyridoxal-phosphate-dependent aminotransferase family. SerC subfamily. In terms of assembly, homodimer. Pyridoxal 5'-phosphate serves as cofactor.

The protein resides in the cytoplasm. It carries out the reaction O-phospho-L-serine + 2-oxoglutarate = 3-phosphooxypyruvate + L-glutamate. It catalyses the reaction 4-(phosphooxy)-L-threonine + 2-oxoglutarate = (R)-3-hydroxy-2-oxo-4-phosphooxybutanoate + L-glutamate. It functions in the pathway amino-acid biosynthesis; L-serine biosynthesis; L-serine from 3-phospho-D-glycerate: step 2/3. It participates in cofactor biosynthesis; pyridoxine 5'-phosphate biosynthesis; pyridoxine 5'-phosphate from D-erythrose 4-phosphate: step 3/5. Catalyzes the reversible conversion of 3-phosphohydroxypyruvate to phosphoserine and of 3-hydroxy-2-oxo-4-phosphonooxybutanoate to phosphohydroxythreonine. In Neisseria gonorrhoeae (strain ATCC 700825 / FA 1090), this protein is Phosphoserine aminotransferase.